Consider the following 277-residue polypeptide: Release factor glutamine methyltransferase (277 aa).

S-adenosyl-L-methionine is bound by residues 120 to 124, aspartate 143, tryptophan 171, and asparagine 186; that span reads GTGSG. A substrate-binding site is contributed by 186-189; it reads NPPY.

The protein belongs to the protein N5-glutamine methyltransferase family. PrmC subfamily.

The enzyme catalyses L-glutaminyl-[peptide chain release factor] + S-adenosyl-L-methionine = N(5)-methyl-L-glutaminyl-[peptide chain release factor] + S-adenosyl-L-homocysteine + H(+). Its function is as follows. Methylates the class 1 translation termination release factors RF1/PrfA and RF2/PrfB on the glutamine residue of the universally conserved GGQ motif. The sequence is that of Release factor glutamine methyltransferase from Coxiella burnetii (strain RSA 493 / Nine Mile phase I).